The chain runs to 340 residues: Glyceraldehyde-3-phosphate dehydrogenase (340 aa).

Residues 11 to 12 and Gly-109 contribute to the NAD(+) site; that span reads TI. The cysteines at positions 123 and 149 are disulfide-linked. 138–140 is a binding site for D-glyceraldehyde 3-phosphate; the sequence is SCN. The active-site Nucleophile is Cys-139. Arg-167 is an NAD(+) binding site. Position 193–194 (193–194) interacts with D-glyceraldehyde 3-phosphate; that stretch reads HA. Residue Gln-300 participates in NAD(+) binding.

This sequence belongs to the glyceraldehyde-3-phosphate dehydrogenase family. As to quaternary structure, homotetramer.

The protein localises to the cytoplasm. It carries out the reaction D-glyceraldehyde 3-phosphate + phosphate + NADP(+) = (2R)-3-phospho-glyceroyl phosphate + NADPH + H(+). It catalyses the reaction D-glyceraldehyde 3-phosphate + phosphate + NAD(+) = (2R)-3-phospho-glyceroyl phosphate + NADH + H(+). The protein operates within carbohydrate degradation; glycolysis; pyruvate from D-glyceraldehyde 3-phosphate: step 1/5. Its function is as follows. Can use both NAD and NADP as cofactors, but exhibits a marked preference for NADP. This Saccharolobus solfataricus (strain ATCC 35092 / DSM 1617 / JCM 11322 / P2) (Sulfolobus solfataricus) protein is Glyceraldehyde-3-phosphate dehydrogenase (gap).